Consider the following 372-residue polypeptide: 1,3,6,8-tetrahydroxynaphthalene synthase (372 aa).

Residue Cys138 is part of the active site.

The protein belongs to the thiolase-like superfamily. Chalcone/stilbene synthases family. Homodimer.

The catalysed reaction is 5 malonyl-CoA + 5 H(+) = naphthalene-1,3,6,8-tetrol + 5 CO2 + 5 CoA + H2O. It functions in the pathway pigment biosynthesis; melanin biosynthesis. In terms of biological role, involved in the biosynthesis of melanin but also various secondary metabolites containing a naphthoquinone ring. Catalyzes the iterative condensation of five CoA-linked malonyl units to form a pentaketide intermediate. THNS subsequently catalyzes the dual intramolecular Claisen and aldol condensations of this linear intermediate to produce the fused ring of 1,3,6,8-tetrahydroxynaphthalene (THN). The chain is 1,3,6,8-tetrahydroxynaphthalene synthase from Streptomyces griseus.